The following is a 73-amino-acid chain: Cx9C motif-containing protein 4, mitochondrial (73 aa).

Positions 2-44 constitute a CHCH domain; sequence SNPCQKEACAIQDCLLSHQYDDAKCAKVIDQLYICCSKFYNDN. 2 short sequence motifs (cx9C motif) span residues 5–15 and 26–36; these read CQKEACAIQDC and CAKVIDQLYIC. Disulfide bonds link cysteine 5–cysteine 36 and cysteine 15–cysteine 26.

It belongs to the CMC4 family.

Its subcellular location is the mitochondrion intermembrane space. This chain is Cx9C motif-containing protein 4, mitochondrial (CMC4), found in Saccharomyces cerevisiae (strain ATCC 204508 / S288c) (Baker's yeast).